The chain runs to 514 residues: Peptide chain release factor 3 (514 aa).

The tr-type G domain occupies 8-268 (KKRRTFAIIS…TFLKFAPEPH (261 aa)). GTP is bound by residues 17–24 (SHPDAGKT), 85–89 (DTPGH), and 139–142 (NKLD).

This sequence belongs to the TRAFAC class translation factor GTPase superfamily. Classic translation factor GTPase family. PrfC subfamily.

The protein resides in the cytoplasm. Increases the formation of ribosomal termination complexes and stimulates activities of RF-1 and RF-2. It binds guanine nucleotides and has strong preference for UGA stop codons. It may interact directly with the ribosome. The stimulation of RF-1 and RF-2 is significantly reduced by GTP and GDP, but not by GMP. The polypeptide is Peptide chain release factor 3 (Streptococcus thermophilus (strain ATCC BAA-491 / LMD-9)).